We begin with the raw amino-acid sequence, 551 residues long: L-lactate permease (551 aa).

Transmembrane regions (helical) follow at residues 13-33 (NIWL…FALI), 37-57 (LKGY…ALLF), 69-89 (VVYG…AAVF), 131-151 (GAAG…GLGF), 159-179 (LCLI…PILV), 194-214 (MVGR…MAIM), 244-264 (FIGP…CLTL), 306-326 (FLFL…ALFA), 366-386 (FDWF…SIVW), 405-425 (LALP…SNYS), 438-458 (TGSA…FLTG), and 530-550 (IFTC…TWMI).

The protein belongs to the lactate permease family.

The protein localises to the cell inner membrane. It catalyses the reaction (S)-lactate(in) + H(+)(in) = (S)-lactate(out) + H(+)(out). It carries out the reaction (R)-lactate(in) + H(+)(in) = (R)-lactate(out) + H(+)(out). The enzyme catalyses glycolate(in) + H(+)(in) = glycolate(out) + H(+)(out). Its function is as follows. Uptake of L-lactate across the membrane. Can also transport D-lactate and glycolate. Seems to be driven by a proton motive force. This chain is L-lactate permease (lldP), found in Salmonella typhimurium (strain LT2 / SGSC1412 / ATCC 700720).